The following is a 476-amino-acid chain: Proline dehydrogenase 2, mitochondrial (476 aa).

The N-terminal 29 residues, 1 to 29 (MANRFLRPNLIHRFSTVSPVGPPTTIIPE), are a transit peptide targeting the mitochondrion.

This sequence belongs to the proline oxidase family. FAD is required as a cofactor. As to expression, expressed in the vascular tissue and in the abscission zone of petals, sepals, stamina, pistils and siliques. Not detected in petioles.

The protein resides in the mitochondrion. It catalyses the reaction L-proline + a quinone = (S)-1-pyrroline-5-carboxylate + a quinol + H(+). It participates in amino-acid degradation; L-proline degradation into L-glutamate; L-glutamate from L-proline: step 1/2. Converts proline to delta-1-pyrroline-5-carboxylate. The polypeptide is Proline dehydrogenase 2, mitochondrial (POX2) (Arabidopsis thaliana (Mouse-ear cress)).